Reading from the N-terminus, the 190-residue chain is Hypoxanthine/guanine phosphoribosyltransferase (190 aa).

Belongs to the purine/pyrimidine phosphoribosyltransferase family. Archaeal HPRT subfamily. As to quaternary structure, homodimer.

The protein resides in the cytoplasm. The enzyme catalyses IMP + diphosphate = hypoxanthine + 5-phospho-alpha-D-ribose 1-diphosphate. It catalyses the reaction GMP + diphosphate = guanine + 5-phospho-alpha-D-ribose 1-diphosphate. It functions in the pathway purine metabolism; IMP biosynthesis via salvage pathway; IMP from hypoxanthine: step 1/1. In terms of biological role, catalyzes a salvage reaction resulting in the formation of IMP that is energically less costly than de novo synthesis. In Methanosalsum zhilinae (strain DSM 4017 / NBRC 107636 / OCM 62 / WeN5) (Methanohalophilus zhilinae), this protein is Hypoxanthine/guanine phosphoribosyltransferase.